Here is a 381-residue protein sequence, read N- to C-terminus: Glycerophosphocholine acyltransferase 1 (381 aa).

Residues 1 to 63 (MANNEDSNSN…IAKQAEEHER (63 aa)) lie on the Cytoplasmic side of the membrane. A helical membrane pass occupies residues 64–84 (FINKVTHLVGVLGFGGFCFLL). Over 85 to 89 (GARPQ) the chain is Lumenal. A helical transmembrane segment spans residues 90–110 (DIPLVYCFFYVIFVPLRWIYY). Topologically, residues 111-116 (RFKKWH) are cytoplasmic. A helical transmembrane segment spans residues 117–137 (YYLLDFCYYANTIFLVDLLLY). Residues 138–141 (PKNE) are Lumenal-facing. Residues 142-162 (KLFMVCFSFAEGPLAWAIIVW) form a helical membrane-spanning segment. Residues 163-173 (RCSLVFSSPDK) lie on the Cytoplasmic side of the membrane. A helical transmembrane segment spans residues 174–194 (IVSVLIHLLPGLVFFTIRWWN). Topologically, residues 195 to 223 (PATFAAMHPVGTDRRVSWPYVEDKAYLFT) are lumenal. The chain crosses the membrane as a helical span at residues 224–244 (WLFLVPLVVYTLWQVLYFLIV). Residues 245–291 (NVLRRQRLLRDPEVMTSYRELSKKAEKANNKLWQLSGLLGDQNRIWM) lie on the Cytoplasmic side of the membrane. Residues 292–312 (YILFQAIFTVATMALTVPIFL) form a helical membrane-spanning segment. At 313–315 (SYR) the chain is on the lumenal side. A helical membrane pass occupies residues 316–336 (LHVIFQILKISAAVWNGGSFL). Topologically, residues 337-381 (LEVMPRQVIQKEKKKKAEMQPIEEQILHHEAVSHPTENEPKSTET) are cytoplasmic.

This sequence belongs to the GPC1 family.

It localises to the membrane. It catalyses the reaction sn-glycerol 3-phosphocholine + an acyl-CoA = a 1-acyl-sn-glycero-3-phosphocholine + CoA. It carries out the reaction sn-glycero-3-phosphoethanolamine + an acyl-CoA = a monoacyl-sn-glycero-3-phosphoethanolamine + CoA. The enzyme catalyses sn-glycerol 3-phosphocholine + (9Z)-octadecenoyl-CoA = (9Z-octadecenoyl)-sn-glycero-3-phosphocholine + CoA. Its function is as follows. Glycerophosphocholine acyltransferase (GPCAT) that utilizes acyl-CoA to acylate glycero-3-phosphocholine (GPC), forming lysophosphatidylcholine (LPC). Shows broad acyl specificities with a preference for 16:0-CoA, polyunsaturated acyl-CoA, and the hydroxylated ricinoleoyl-CoA. Also catalyzes the acylation of glycero-3-phosphoethanolamine (GPE) with acyl-CoA. In addition to acyl-CoA, GPCAT efficiently utilizes LPC and lysophosphatidylethanolamine (LPE) as acyl donors in the acylation of GPC. Contributes to the maintenance of phosphatidylcholine (PC) homeostasis and might also have specific functions in acyl editing of PC, such as transferring acyl groups modified at the sn-2 position of PC to the sn-1. The protein is Glycerophosphocholine acyltransferase 1 of Arabidopsis thaliana (Mouse-ear cress).